A 327-amino-acid chain; its full sequence is GMP reductase (327 aa).

Cys176 serves as the catalytic Thioimidate intermediate. 205 to 228 serves as a coordination point for NADP(+); the sequence is IIADGGIRTHGDIAKSIRFGASMV.

This sequence belongs to the IMPDH/GMPR family. GuaC type 2 subfamily.

The catalysed reaction is IMP + NH4(+) + NADP(+) = GMP + NADPH + 2 H(+). Its function is as follows. Catalyzes the irreversible NADPH-dependent deamination of GMP to IMP. It functions in the conversion of nucleobase, nucleoside and nucleotide derivatives of G to A nucleotides, and in maintaining the intracellular balance of A and G nucleotides. This Streptococcus pyogenes serotype M1 protein is GMP reductase.